We begin with the raw amino-acid sequence, 308 residues long: Homeobox protein abdominal-A homolog (308 aa).

Positions 138–197 (RRRGRQTYTRFQTLELEKEFHFNHYLTRRRRIEIAHALCLTERQIKIWFQNRRMKLKKEL) form a DNA-binding region, homeobox. Basic and acidic residues predominate over residues 207 to 221 (ARREREEQDKMKNES). The disordered stretch occupies residues 207-277 (ARREREEQDK…SGNLGSHLHH (71 aa)). Positions 223 to 247 (KSAQQHHSQKQAQQEHTVVGSQQTS) are enriched in low complexity. Residues 248–269 (NGGGTGGGTGGSGGAGSGGSSG) show a composition bias toward gly residues.

This sequence belongs to the Antp homeobox family.

The protein resides in the nucleus. In terms of biological role, sequence-specific transcription factor which is part of a developmental regulatory system that provides cells with specific positional identities on the anterior-posterior axis. This chain is Homeobox protein abdominal-A homolog, found in Anopheles gambiae (African malaria mosquito).